An 822-amino-acid chain; its full sequence is Myosin-D (822 aa).

Residues Leu95–Arg770 form the Myosin motor domain. An ATP-binding site is contributed by Gly189 to Thr196. Positions Ser660–Asp670 are actin-binding. The segment at Ala772–Cys822 is tail.

This sequence belongs to the TRAFAC class myosin-kinesin ATPase superfamily. Myosin family.

The protein localises to the cell membrane. Its subcellular location is the cytoplasm. In terms of biological role, myosins are actin-based motor molecules with ATPase activity. Unconventional myosins serve in intracellular movements. Their highly divergent tails are presumed to bind to membranous compartments, which would be moved relative to actin filaments. In Toxoplasma gondii, this protein is Myosin-D.